Reading from the N-terminus, the 296-residue chain is ATP synthase gamma chain (296 aa).

Belongs to the ATPase gamma chain family. In terms of assembly, F-type ATPases have 2 components, CF(1) - the catalytic core - and CF(0) - the membrane proton channel. CF(1) has five subunits: alpha(3), beta(3), gamma(1), delta(1), epsilon(1). CF(0) has three main subunits: a, b and c.

The protein resides in the cell inner membrane. In terms of biological role, produces ATP from ADP in the presence of a proton gradient across the membrane. The gamma chain is believed to be important in regulating ATPase activity and the flow of protons through the CF(0) complex. The chain is ATP synthase gamma chain from Methylorubrum extorquens (strain CM4 / NCIMB 13688) (Methylobacterium extorquens).